The chain runs to 575 residues: Arginine--tRNA ligase (575 aa).

A 'HIGH' region motif is present at residues 136–146; that stretch reads ANPTGPLHVGH.

The protein belongs to the class-I aminoacyl-tRNA synthetase family. In terms of assembly, monomer.

It localises to the cytoplasm. The catalysed reaction is tRNA(Arg) + L-arginine + ATP = L-arginyl-tRNA(Arg) + AMP + diphosphate. In Polynucleobacter necessarius subsp. necessarius (strain STIR1), this protein is Arginine--tRNA ligase.